The following is a 334-amino-acid chain: L-lactate dehydrogenase B chain (334 aa).

Alanine 2 is subject to N-acetylalanine. At lysine 7 the chain carries N6-acetyllysine. The residue at position 44 (serine 44) is a Phosphoserine. NAD(+) is bound by residues 53–58 and arginine 100; that span reads DVLEDK. Lysine 58 bears the N6-acetyllysine mark. Arginine 107 is a substrate binding site. Lysine 119 is subject to N6-acetyllysine. An NAD(+)-binding site is contributed by asparagine 139. Positions 139 and 170 each coordinate substrate. The active-site Proton acceptor is histidine 194. The residue at position 240 (tyrosine 240) is a Phosphotyrosine. Threonine 249 contributes to the substrate binding site. N6-acetyllysine is present on lysine 329.

This sequence belongs to the LDH/MDH superfamily. LDH family. As to quaternary structure, homotetramer. Interacts with PTEN upstream reading frame protein MP31; the interaction leads to inhibition of mitochondrial lactate dehydrogenase activity, preventing conversion of lactate to pyruvate in mitochondria.

It is found in the cytoplasm. It localises to the mitochondrion inner membrane. The catalysed reaction is (S)-lactate + NAD(+) = pyruvate + NADH + H(+). The protein operates within fermentation; pyruvate fermentation to lactate; (S)-lactate from pyruvate: step 1/1. Functionally, interconverts simultaneously and stereospecifically pyruvate and lactate with concomitant interconversion of NADH and NAD(+). This Monodelphis domestica (Gray short-tailed opossum) protein is L-lactate dehydrogenase B chain (LDHB).